The chain runs to 150 residues: Interferon antagonist OPG027 (150 aa).

The protein belongs to the orthopoxvirus OPG027 family.

Functionally, inhibits antiviral activity induced by type I interferons. Does not block signal transduction of IFN, but is important to counteract the host antiviral state induced by a pre-treatment with IFN. The polypeptide is Interferon antagonist OPG027 (OPG027) (Vaccinia virus (strain Ankara) (VACV)).